The primary structure comprises 596 residues: Lamin-B2 (596 aa).

Residues 1–20 (MASLPPHAGPATPLSPTRLS) are disordered. A head region spans residues 1-26 (MASLPPHAGPATPLSPTRLSRLQEKE). Residue threonine 12 is modified to Phosphothreonine. Position 15 is a phosphoserine (serine 15). The IF rod domain occupies 24–380 (EKEELRELND…KLLEGEEERL (357 aa)). The coil 1A stretch occupies residues 27–61 (ELRELNDRLAHYIDRVRALELENDRLLLRISEKEE). Residue lysine 59 is modified to N6-acetyllysine; alternate. Lysine 59 is covalently cross-linked (Glycyl lysine isopeptide (Lys-Gly) (interchain with G-Cter in SUMO2); alternate). The tract at residues 62-73 (VTTREVSGIKTL) is linker 1. The coil 1B stretch occupies residues 74-207 (YESELADARR…AFSKSVFEEE (134 aa)). Glycyl lysine isopeptide (Lys-Gly) (interchain with G-Cter in SUMO2) cross-links involve residues lysine 173 and lysine 233. The linker 2 stretch occupies residues 208–234 (VRETRRRHERRLVEVDSSRQQEYDFKM). Residues 235 to 378 (AQALEDLRSQ…YRKLLEGEEE (144 aa)) form a coil 2 region. 2 positions are modified to phosphoserine: serine 294 and serine 385. Residues 376–440 (EEERLKLSPS…ASRVSSGSRL (65 aa)) form a disordered region. Residues 379 to 596 (RLKLSPSPSS…RTTSRGCRLM (218 aa)) form a tail region. Residues 382-403 (LSPSPSSRITISRATSSSSSSS) show a composition bias toward low complexity. A glycan (O-linked (GlcNAc) threonine) is linked at threonine 391. Phosphoserine is present on residues serine 398, serine 400, and serine 402. Omega-N-methylarginine is present on arginine 413. Positions 415 to 420 (KRRRLE) match the Nuclear localization signal motif. The segment covering 425 to 439 (SGSPSRASRVSSGSR) has biased composition (low complexity). The LTD domain maps to 438 to 559 (SRLAQQTVAT…VKAAKHSSVQ (122 aa)). Lysine 465 participates in a covalent cross-link: Glycyl lysine isopeptide (Lys-Gly) (interchain with G-Cter in SUMO2). At serine 473 the chain carries Phosphoserine. The interval 552–596 (AAKHSSVQGRENGEEEEEEEAEFGEEDLFHQQGDPRTTSRGCRLM) is disordered. A compositionally biased stretch (acidic residues) spans 564–577 (GEEEEEEEAEFGEE). Residues 585-596 (DPRTTSRGCRLM) show a composition bias toward polar residues. Position 593 is a cysteine methyl ester (cysteine 593). Cysteine 593 carries the S-farnesyl cysteine lipid modification. The propeptide at 594-596 (RLM) is removed in mature form.

Belongs to the intermediate filament family. As to quaternary structure, dimer. Lamin dimers then assemble into dimeric head-to-tail polymers. Ultimately, two head-to-tail polymers assemble laterally into a protofilament with a uniformly shaped rod of 3.5 nm in diameter. Interacts with TMEM43. Post-translationally, B-type lamins undergo a series of modifications, such as farnesylation and phosphorylation. Increased phosphorylation of the lamins occurs before envelope disintegration and probably plays a role in regulating lamin associations. In terms of processing, phosphorylation plays a key role in lamin organization, subcellular localization and nuclear envelope disintegration. Phosphorylation by CDK1 at Ser-15 and Ser-385 at the onset of mitosis drives lamin disassembly and nuclear envelope breakdown. In terms of tissue distribution, germ cell-specific.

It is found in the nucleus lamina. Lamins are intermediate filament proteins that assemble into a filamentous meshwork, and which constitute the major components of the nuclear lamina, a fibrous layer on the nucleoplasmic side of the inner nuclear membrane. Lamins provide a framework for the nuclear envelope, bridging the nuclear envelope and chromatin, thereby playing an important role in nuclear assembly, chromatin organization, nuclear membrane and telomere dynamics. The structural integrity of the lamina is strictly controlled by the cell cycle, as seen by the disintegration and formation of the nuclear envelope in prophase and telophase, respectively. The protein is Lamin-B2 (Lmnb2) of Mus musculus (Mouse).